We begin with the raw amino-acid sequence, 324 residues long: Beta-ketoacyl-[acyl-carrier-protein] synthase III (324 aa).

Residues Cys-112 and His-249 contribute to the active site. The tract at residues 250–254 (QANRR) is ACP-binding. Asn-279 is a catalytic residue.

It belongs to the thiolase-like superfamily. FabH family. In terms of assembly, homodimer.

It is found in the cytoplasm. It carries out the reaction malonyl-[ACP] + acetyl-CoA + H(+) = 3-oxobutanoyl-[ACP] + CO2 + CoA. The protein operates within lipid metabolism; fatty acid biosynthesis. In terms of biological role, catalyzes the condensation reaction of fatty acid synthesis by the addition to an acyl acceptor of two carbons from malonyl-ACP. Catalyzes the first condensation reaction which initiates fatty acid synthesis and may therefore play a role in governing the total rate of fatty acid production. Possesses both acetoacetyl-ACP synthase and acetyl transacylase activities. Its substrate specificity determines the biosynthesis of branched-chain and/or straight-chain of fatty acids. The chain is Beta-ketoacyl-[acyl-carrier-protein] synthase III from Streptococcus equi subsp. equi (strain 4047).